The following is a 517-amino-acid chain: Bifunctional purine biosynthesis protein PurH (517 aa).

Residues 1-146 (MAPIALLSVS…KNHAHVAVLT (146 aa)) enclose the MGS-like domain.

Belongs to the PurH family.

The enzyme catalyses (6R)-10-formyltetrahydrofolate + 5-amino-1-(5-phospho-beta-D-ribosyl)imidazole-4-carboxamide = 5-formamido-1-(5-phospho-D-ribosyl)imidazole-4-carboxamide + (6S)-5,6,7,8-tetrahydrofolate. It carries out the reaction IMP + H2O = 5-formamido-1-(5-phospho-D-ribosyl)imidazole-4-carboxamide. The protein operates within purine metabolism; IMP biosynthesis via de novo pathway; 5-formamido-1-(5-phospho-D-ribosyl)imidazole-4-carboxamide from 5-amino-1-(5-phospho-D-ribosyl)imidazole-4-carboxamide (10-formyl THF route): step 1/1. It functions in the pathway purine metabolism; IMP biosynthesis via de novo pathway; IMP from 5-formamido-1-(5-phospho-D-ribosyl)imidazole-4-carboxamide: step 1/1. This chain is Bifunctional purine biosynthesis protein PurH, found in Prochlorococcus marinus (strain MIT 9313).